Consider the following 243-residue polypeptide: Small ribosomal subunit protein uS2c (243 aa).

Residues 224–243 (GNNGKVSSDQEDTQELQTVQ) are disordered.

Belongs to the universal ribosomal protein uS2 family.

Its subcellular location is the plastid. The protein resides in the chloroplast. The sequence is that of Small ribosomal subunit protein uS2c (rps2) from Rhodomonas salina (Cryptomonas salina).